We begin with the raw amino-acid sequence, 206 residues long: Ribosomal RNA small subunit methyltransferase G (206 aa).

S-adenosyl-L-methionine-binding positions include Gly-74, Leu-79, 125–126, and Arg-140; that span reads VE.

It belongs to the methyltransferase superfamily. RNA methyltransferase RsmG family.

It localises to the cytoplasm. The enzyme catalyses guanosine(527) in 16S rRNA + S-adenosyl-L-methionine = N(7)-methylguanosine(527) in 16S rRNA + S-adenosyl-L-homocysteine. In terms of biological role, specifically methylates the N7 position of guanine in position 527 of 16S rRNA. In Shewanella oneidensis (strain ATCC 700550 / JCM 31522 / CIP 106686 / LMG 19005 / NCIMB 14063 / MR-1), this protein is Ribosomal RNA small subunit methyltransferase G.